The chain runs to 369 residues: Dof zinc finger protein DOF2.5 (369 aa).

The Dof-type zinc finger occupies 80–134; the sequence is LNCPRCNSTNTKFCYYNNYSLTQPRYFCKGCRRYWTEGGSLRNVPVGGSSRKNKR. The Zn(2+) site is built by Cys82, Cys85, Cys107, and Cys110. Disordered regions lie at residues 120 to 149, 203 to 224, 284 to 304, and 322 to 369; these read LRNVPVGGSSRKNKRSSSSSSSNILQTIPS, EGNGNITHQQQPSSSSSVYGSS, TDHQGLGHNSNNRSEALHSDH, and SSSI…GSSW. Low complexity predominate over residues 214–224; that stretch reads PSSSSSVYGSS. Residues 284-297 are compositionally biased toward polar residues; the sequence is TDHQGLGHNSNNRS. The span at 342–362 shows a compositional bias: low complexity; it reads NNNNNNNSSPNNGYWSGMFST.

In terms of tissue distribution, expressed in the vascular system of the mother plant, but not present in the seed and embryo. In maturing siliques, found all through the funiculus connecting the placenta to the ovule, but not in the ovule.

The protein resides in the nucleus. Its function is as follows. Transcription factor specifically involved in the maternal control of seed germination. Regulates transcription by binding to a 5'-AA[AG]G-3' consensus core sequence. May ensure the activation of a component that would trigger germination as a consequence of red light perception. This Arabidopsis thaliana (Mouse-ear cress) protein is Dof zinc finger protein DOF2.5 (DOF2.5).